Reading from the N-terminus, the 312-residue chain is Probable cell division protein WhiA (312 aa).

The segment at residues 274 to 308 (SLKELGTLVPGGPISKSGVNHRLRKLNAYADELRQ) is a DNA-binding region (H-T-H motif).

Belongs to the WhiA family.

In terms of biological role, involved in cell division and chromosome segregation. The sequence is that of Probable cell division protein WhiA from Limosilactobacillus fermentum (strain NBRC 3956 / LMG 18251) (Lactobacillus fermentum).